The primary structure comprises 308 residues: Ribonuclease HIII (308 aa).

Residues 88-304 (FHCIGSDEAG…RDKAIHLMNQ (217 aa)) form the RNase H type-2 domain. 3 residues coordinate a divalent metal cation: D94, E95, and D199.

Belongs to the RNase HII family. RnhC subfamily. Mn(2+) serves as cofactor. It depends on Mg(2+) as a cofactor.

Its subcellular location is the cytoplasm. It catalyses the reaction Endonucleolytic cleavage to 5'-phosphomonoester.. Its function is as follows. Endonuclease that specifically degrades the RNA of RNA-DNA hybrids. This Staphylococcus epidermidis (strain ATCC 12228 / FDA PCI 1200) protein is Ribonuclease HIII.